The sequence spans 435 residues: Nucleoredoxin (435 aa).

N-acetylserine is present on Ser-2. Positions 167-314 (PKPFREVIAG…FPWHPKPVLE (148 aa)) constitute a Thioredoxin domain.

Belongs to the nucleoredoxin family. In terms of assembly, associates with the phosphatase 2A holoenzyme. Interacts with PPP2CA; the interaction is direct. Interacts with DVL1 (via PDZ domain); the interaction is direct and regulated by oxidative stress. In terms of tissue distribution, widely expressed with higher expression in testis and skin.

The protein localises to the cytoplasm. It is found in the cytosol. Its subcellular location is the nucleus. The enzyme catalyses [protein]-dithiol + NAD(+) = [protein]-disulfide + NADH + H(+). The catalysed reaction is [protein]-dithiol + NADP(+) = [protein]-disulfide + NADPH + H(+). Functions as a redox-dependent negative regulator of the Wnt signaling pathway, possibly by preventing ubiquitination of DVL3 by the BCR(KLHL12) complex. May also function as a transcriptional regulator act as a regulator of protein phosphatase 2A (PP2A). This chain is Nucleoredoxin (Nxn), found in Mus musculus (Mouse).